The sequence spans 393 residues: Formate-dependent phosphoribosylglycinamide formyltransferase (393 aa).

N(1)-(5-phospho-beta-D-ribosyl)glycinamide contacts are provided by residues 22-23 (EL) and Glu82. ATP is bound by residues Arg114, Lys155, 160-165 (SSGKGQ), 195-198 (EGFV), and Glu203. The ATP-grasp domain maps to 119–308 (RLAAEELGLV…EFALHVRAIL (190 aa)). Mg(2+) is bound by residues Glu267 and Glu279. N(1)-(5-phospho-beta-D-ribosyl)glycinamide contacts are provided by residues Asp286, Lys356, and 363 to 364 (RR).

It belongs to the PurK/PurT family. Homodimer.

The enzyme catalyses N(1)-(5-phospho-beta-D-ribosyl)glycinamide + formate + ATP = N(2)-formyl-N(1)-(5-phospho-beta-D-ribosyl)glycinamide + ADP + phosphate + H(+). Its pathway is purine metabolism; IMP biosynthesis via de novo pathway; N(2)-formyl-N(1)-(5-phospho-D-ribosyl)glycinamide from N(1)-(5-phospho-D-ribosyl)glycinamide (formate route): step 1/1. Its function is as follows. Involved in the de novo purine biosynthesis. Catalyzes the transfer of formate to 5-phospho-ribosyl-glycinamide (GAR), producing 5-phospho-ribosyl-N-formylglycinamide (FGAR). Formate is provided by PurU via hydrolysis of 10-formyl-tetrahydrofolate. The chain is Formate-dependent phosphoribosylglycinamide formyltransferase from Solidesulfovibrio magneticus (strain ATCC 700980 / DSM 13731 / RS-1) (Desulfovibrio magneticus).